The chain runs to 208 residues: FMN-dependent NADH:quinone oxidoreductase 4 (208 aa).

The protein belongs to the azoreductase type 1 family. As to quaternary structure, homodimer. The cofactor is FMN.

It carries out the reaction 2 a quinone + NADH + H(+) = 2 a 1,4-benzosemiquinone + NAD(+). It catalyses the reaction N,N-dimethyl-1,4-phenylenediamine + anthranilate + 2 NAD(+) = 2-(4-dimethylaminophenyl)diazenylbenzoate + 2 NADH + 2 H(+). In terms of biological role, quinone reductase that provides resistance to thiol-specific stress caused by electrophilic quinones. Functionally, also exhibits azoreductase activity. Catalyzes the reductive cleavage of the azo bond in aromatic azo compounds to the corresponding amines. The protein is FMN-dependent NADH:quinone oxidoreductase 4 of Bacillus anthracis.